Here is a 202-residue protein sequence, read N- to C-terminus: Inner membrane-spanning protein YciB (202 aa).

6 helical membrane-spanning segments follow: residues 3–23 (ILFD…AGGN), 46–66 (ILLA…WVWM), 73–93 (TMLW…LFFH), 100–120 (WKPT…AVIF), 145–165 (LAWA…AYNF), and 173–193 (FKLF…GFYL).

The protein belongs to the YciB family.

The protein resides in the cell inner membrane. In terms of biological role, plays a role in cell envelope biogenesis, maintenance of cell envelope integrity and membrane homeostasis. The sequence is that of Inner membrane-spanning protein YciB from Aromatoleum aromaticum (strain DSM 19018 / LMG 30748 / EbN1) (Azoarcus sp. (strain EbN1)).